Here is a 398-residue protein sequence, read N- to C-terminus: Elongation factor Tu (398 aa).

A tr-type G domain is found at 10–207 (KPHVNIGTIG…TVDSYIPEPE (198 aa)). Residues 19 to 26 (GHVDHGKT) form a G1 region. A GTP-binding site is contributed by 19–26 (GHVDHGKT). Threonine 26 is a Mg(2+) binding site. Residues 63-67 (GITIN) are G2. The tract at residues 84 to 87 (DAPG) is G3. GTP is bound by residues 84 to 88 (DAPGH) and 139 to 142 (NKVD). Residues 139–142 (NKVD) are G4. A G5 region spans residues 177 to 179 (SAL).

The protein belongs to the TRAFAC class translation factor GTPase superfamily. Classic translation factor GTPase family. EF-Tu/EF-1A subfamily. In terms of assembly, monomer.

The protein resides in the cytoplasm. The catalysed reaction is GTP + H2O = GDP + phosphate + H(+). In terms of biological role, GTP hydrolase that promotes the GTP-dependent binding of aminoacyl-tRNA to the A-site of ribosomes during protein biosynthesis. This is Elongation factor Tu from Streptococcus pyogenes serotype M28 (strain MGAS6180).